Here is a 429-residue protein sequence, read N- to C-terminus: MSKSLQAIRGMNDILPEQTPAWRYLERTFAGLLDGYGYSEIRLPILEFTELFARGIGEGTDVVDKEMYTFLDRNGESLTMRPEGTAGCVRAVLEHGLSGGGQVQKLWYTGPMFRYEKPQKGRYRQFHQIGVEVFNLPGPDIDAELIILTWRLWQKLGMADAVTLQLNTLGSSEARARYREALVAYLQERFEQLDEDSQRRMTTNPLRILDSKVESTQALLVGAPTLHDYLDEESIAHFEGLKARLDAVGLRYEINQKLVRGLDYYCRTAFEWVTDKLGAQGTVCGGGRYDGLVSQFGGKPTPGVGFAMGVERLVLLLETLDVIPAELNRPADLYVCAFGEPAELAALALAEQLRSSIPGIRLLVNAGAGSFKSQFKKADKSGARYALILGEDEVANRVVGFKPLRDEGEQQSIAWDALPEHLAACLAQA.

This sequence belongs to the class-II aminoacyl-tRNA synthetase family. In terms of assembly, homodimer.

It is found in the cytoplasm. The catalysed reaction is tRNA(His) + L-histidine + ATP = L-histidyl-tRNA(His) + AMP + diphosphate + H(+). This chain is Histidine--tRNA ligase, found in Pseudomonas paraeruginosa (strain DSM 24068 / PA7) (Pseudomonas aeruginosa (strain PA7)).